We begin with the raw amino-acid sequence, 76 residues long: MSSTTVTKKDQKTVVEKKETEEEEFEEFPIQEWPERADGEDDEVNVWEDNWDDETHESEFSKQLKEELRKGGHPIA.

Disordered stretches follow at residues 1-28 and 52-76; these read MSST…FEEF and DDET…HPIA. Basic and acidic residues-rich tracts occupy residues 7 to 20 and 57 to 70; these read TKKD…KKET and ESEF…ELRK.

The protein belongs to the DSS1/SEM1 family. As to quaternary structure, part of the 26S proteasome.

The protein resides in the nucleus. The protein localises to the cytoplasm. Subunit of the 26S proteasome which plays a role in ubiquitin-dependent proteolysis. Has an essential role in oogenesis and larval growth. Required for intestinal function and default lifespan. In Caenorhabditis briggsae, this protein is Probable 26S proteasome complex subunit dss-1.